Here is a 211-residue protein sequence, read N- to C-terminus: Protein-L-isoaspartate O-methyltransferase (211 aa).

The active site involves serine 62.

It belongs to the methyltransferase superfamily. L-isoaspartyl/D-aspartyl protein methyltransferase family.

The protein resides in the cytoplasm. It catalyses the reaction [protein]-L-isoaspartate + S-adenosyl-L-methionine = [protein]-L-isoaspartate alpha-methyl ester + S-adenosyl-L-homocysteine. In terms of biological role, catalyzes the methyl esterification of L-isoaspartyl residues in peptides and proteins that result from spontaneous decomposition of normal L-aspartyl and L-asparaginyl residues. It plays a role in the repair and/or degradation of damaged proteins. In Shewanella putrefaciens (strain CN-32 / ATCC BAA-453), this protein is Protein-L-isoaspartate O-methyltransferase.